Here is a 158-residue protein sequence, read N- to C-terminus: Peptide methionine sulfoxide reductase MsrA (158 aa).

The active site involves cysteine 10.

This sequence belongs to the MsrA Met sulfoxide reductase family.

The enzyme catalyses L-methionyl-[protein] + [thioredoxin]-disulfide + H2O = L-methionyl-(S)-S-oxide-[protein] + [thioredoxin]-dithiol. It catalyses the reaction [thioredoxin]-disulfide + L-methionine + H2O = L-methionine (S)-S-oxide + [thioredoxin]-dithiol. In terms of biological role, has an important function as a repair enzyme for proteins that have been inactivated by oxidation. Catalyzes the reversible oxidation-reduction of methionine sulfoxide in proteins to methionine. The polypeptide is Peptide methionine sulfoxide reductase MsrA (Alkaliphilus metalliredigens (strain QYMF)).